Reading from the N-terminus, the 609-residue chain is UvrABC system protein C (609 aa).

Residues 15-92 (TGSGVYQMQD…IKQFRPRYNV (78 aa)) enclose the GIY-YIG domain. In terms of domain architecture, UVR spans 202–237 (DQVIIKLTERMEVASENLVFEEAAHYRDQIRQLRRL).

The protein belongs to the UvrC family. As to quaternary structure, interacts with UvrB in an incision complex.

It is found in the cytoplasm. Its function is as follows. The UvrABC repair system catalyzes the recognition and processing of DNA lesions. UvrC both incises the 5' and 3' sides of the lesion. The N-terminal half is responsible for the 3' incision and the C-terminal half is responsible for the 5' incision. The chain is UvrABC system protein C from Coxiella burnetii (strain CbuK_Q154) (Coxiella burnetii (strain Q154)).